A 367-amino-acid polypeptide reads, in one-letter code: Phosphoribosylaminoimidazole-succinocarboxamide synthase (367 aa).

It belongs to the SAICAR synthetase family.

It catalyses the reaction 5-amino-1-(5-phospho-D-ribosyl)imidazole-4-carboxylate + L-aspartate + ATP = (2S)-2-[5-amino-1-(5-phospho-beta-D-ribosyl)imidazole-4-carboxamido]succinate + ADP + phosphate + 2 H(+). The protein operates within purine metabolism; IMP biosynthesis via de novo pathway; 5-amino-1-(5-phospho-D-ribosyl)imidazole-4-carboxamide from 5-amino-1-(5-phospho-D-ribosyl)imidazole-4-carboxylate: step 1/2. In Shewanella sp. (strain MR-7), this protein is Phosphoribosylaminoimidazole-succinocarboxamide synthase.